The sequence spans 168 residues: Transcriptional regulator MraZ (168 aa).

SpoVT-AbrB domains are found at residues 8–51 (EYNQ…GGDR) and 90–140 (ALNM…KADT).

It belongs to the MraZ family. As to quaternary structure, forms oligomers.

It localises to the cytoplasm. The protein localises to the nucleoid. In Cereibacter sphaeroides (strain ATCC 17029 / ATH 2.4.9) (Rhodobacter sphaeroides), this protein is Transcriptional regulator MraZ.